The following is a 542-amino-acid chain: Sialate O-acetylesterase (542 aa).

A signal peptide spans 1–23 (MVSPRPVGLMLLLIIARVSRGAG). N-linked (GlcNAc...) asparagine glycans are attached at residues N107, N138, N188, N294, N357, N428, N449, and N463.

In terms of assembly, disulfide-linked heterodimer of a small subunit and a large subunit. The two subunits are derived from a single precursor by proteolytic cleavage. Post-translationally, glycosylated. In terms of tissue distribution, widely expressed.

It is found in the lysosome. It catalyses the reaction N-acetyl-9-O-acetylneuraminate + H2O = N-acetylneuraminate + acetate + H(+). It carries out the reaction an Ac-O-9-sialoglycoconjugate + H2O = a sialoglycoconjugate + acetate + H(+). Its activity is regulated as follows. Inhibited by diisopropyl fluorophosphate and diethyl-P-nitrophenyl phosphate. Catalyzes the removal of O-acetyl ester groups from position 9 of the free diacetylated sialate N-acetyl-9-O-acetylneuraminate (Neu5,9Ac2) in the cytosol and of the diacetylated sialate residues of sialylglycoconjugates in the lysosomes. Together with the sialate-O-acetyltransferase they regulate the balance of acetylated sialoglycoconjugates, key players in various processes such as cell-cell interactions, host-pathogen recognition, and tumor antigenicity. The protein is Sialate O-acetylesterase (Siae) of Rattus norvegicus (Rat).